The sequence spans 201 residues: Recombination protein RecR (201 aa).

Residues Cys-57–Cys-74 form a C4-type zinc finger. A Toprim domain is found at Ser-82–Ser-178.

The protein belongs to the RecR family.

May play a role in DNA repair. It seems to be involved in an RecBC-independent recombinational process of DNA repair. It may act with RecF and RecO. The polypeptide is Recombination protein RecR (Oenococcus oeni (strain ATCC BAA-331 / PSU-1)).